An 89-amino-acid chain; its full sequence is DNA-directed RNA polymerase subunit omega (89 aa).

Belongs to the RNA polymerase subunit omega family. As to quaternary structure, the RNAP catalytic core consists of 2 alpha, 1 beta, 1 beta' and 1 omega subunit. When a sigma factor is associated with the core the holoenzyme is formed, which can initiate transcription.

The enzyme catalyses RNA(n) + a ribonucleoside 5'-triphosphate = RNA(n+1) + diphosphate. In terms of biological role, promotes RNA polymerase assembly. Latches the N- and C-terminal regions of the beta' subunit thereby facilitating its interaction with the beta and alpha subunits. This Clavibacter michiganensis subsp. michiganensis (strain NCPPB 382) protein is DNA-directed RNA polymerase subunit omega.